A 35-amino-acid polypeptide reads, in one-letter code: Photosystem II reaction center protein T (35 aa).

A helical membrane pass occupies residues 3-23; sequence ALVYTFLLVSTLGILFFAIFF.

It belongs to the PsbT family. In terms of assembly, PSII is composed of 1 copy each of membrane proteins PsbA, PsbB, PsbC, PsbD, PsbE, PsbF, PsbH, PsbI, PsbJ, PsbK, PsbL, PsbM, PsbT, PsbY, PsbZ, Psb30/Ycf12, at least 3 peripheral proteins of the oxygen-evolving complex and a large number of cofactors. It forms dimeric complexes.

It is found in the plastid. It localises to the chloroplast thylakoid membrane. Found at the monomer-monomer interface of the photosystem II (PS II) dimer, plays a role in assembly and dimerization of PSII. PSII is a light-driven water plastoquinone oxidoreductase, using light energy to abstract electrons from H(2)O, generating a proton gradient subsequently used for ATP formation. This chain is Photosystem II reaction center protein T, found in Gnetum gnemon (Spanish joint-fir).